A 223-amino-acid chain; its full sequence is MPAALPDHFFHRDAQLLARDLLGKVIRHKVGELWLAARIIETEAYYCAEKGSHASLGYTEKRKALFLDGGHIYMYYARGGDSLNFSAEGPGNAVLIKSAFPWTDATSDENALAQMQLNNPDASGAIRPPQRLCAGQTLLCKALGLKVPEWDARRFDPQRLLVEDIGQAPERIIQTTRLGIPAGRDEHLMYRFVDAGYARFCTRNPLRRGQVEGRDYLFLDQGN.

The protein belongs to the DNA glycosylase MPG family.

This is Putative 3-methyladenine DNA glycosylase from Pseudomonas savastanoi pv. phaseolicola (strain 1448A / Race 6) (Pseudomonas syringae pv. phaseolicola (strain 1448A / Race 6)).